The following is a 494-amino-acid chain: Cytochrome P450 2G1 (494 aa).

Cys439 serves as a coordination point for heme.

This sequence belongs to the cytochrome P450 family. The cofactor is heme. Olfactory epithelium.

The protein resides in the endoplasmic reticulum membrane. Its subcellular location is the microsome membrane. It carries out the reaction an organic molecule + reduced [NADPH--hemoprotein reductase] + O2 = an alcohol + oxidized [NADPH--hemoprotein reductase] + H2O + H(+). Its function is as follows. Cytochromes P450 are a group of heme-thiolate monooxygenases. This isozyme seems to be implicated in olfaction. The protein is Cytochrome P450 2G1 (Cyp2g1) of Rattus norvegicus (Rat).